Reading from the N-terminus, the 49-residue chain is Multidrug efflux pump accessory protein AcrZ (49 aa).

The Periplasmic segment spans residues 1–7; sequence MLELLKS. The helical transmembrane segment at 8 to 28 threads the bilayer; that stretch reads LVFAVIMVPVVMAIILGLIYG. The Cytoplasmic portion of the chain corresponds to 29 to 49; that stretch reads LGEVFNIFSGVGKKDQPGQNH.

This sequence belongs to the AcrZ family. Part of the AcrA-AcrB-AcrZ-TolC efflux pump, interacts directly with AcrB.

It localises to the cell inner membrane. Functionally, acrA-AcrB-AcrZ-TolC is a drug efflux protein complex with a broad substrate specificity. This protein binds to AcrB and is required for efflux of some but not all substrates, suggesting it may influence the specificity of drug export. The chain is Multidrug efflux pump accessory protein AcrZ from Escherichia coli O157:H7.